The chain runs to 111 residues: Large ribosomal subunit protein uL22 (111 aa).

This sequence belongs to the universal ribosomal protein uL22 family. Part of the 50S ribosomal subunit.

In terms of biological role, this protein binds specifically to 23S rRNA; its binding is stimulated by other ribosomal proteins, e.g. L4, L17, and L20. It is important during the early stages of 50S assembly. It makes multiple contacts with different domains of the 23S rRNA in the assembled 50S subunit and ribosome. The globular domain of the protein is located near the polypeptide exit tunnel on the outside of the subunit, while an extended beta-hairpin is found that lines the wall of the exit tunnel in the center of the 70S ribosome. This is Large ribosomal subunit protein uL22 from Chlamydia trachomatis serovar A (strain ATCC VR-571B / DSM 19440 / HAR-13).